The following is a 145-amino-acid chain: uncharacterized protein (145 aa).

Positions Met-1–Ala-29 are cleaved as a signal peptide. A coiled-coil region spans residues Lys-67 to Leu-101.

This is an uncharacterized protein from Bacillus subtilis (strain 168).